We begin with the raw amino-acid sequence, 475 residues long: MACSLKDELLCSICLSIYQDPVSLGCEHYFCRRCITEHWVRQEAQGARDCPECRRTFAEPALAPSLKLANIVERYSAFPLDAILNARRAARPCQAHDKVKLFCLTDRALLCFFCDEPALHEQHQVTGIDDAFEELQRELKEQLQALQDSEREHTEALQLLKRQLAETKSSTKSLRTTIGEAFERLHRLLRERQKAMLEELEADTARTLTDIEQKVQRYSQQLRKVQEGAQILQERLAETDRHTFLAGVASLSERLKGKIHETNLTYEDFPTSKYTGPLQYTIWKSLFQDIHPVPAALTMDPGTAHQRLILSDDCTIVAYGNLHPQPLQDSPKRFDVEVSVLGSEAFSSGVHYWEVVVAEKTQWVIGLAHEAASRKGSIQIQPSRGFYCIVMHDGNQYSACTEPWTRLNVRDKLDKVGVFLDYDQGLLIFYNADDMSWLYTFREKFPGKLCSYFSPGQSHANGKNVQPLRINTVRI.

Residues 11 to 54 form an RING-type zinc finger; sequence CSICLSIYQDPVSLGCEHYFCRRCITEHWVRQEAQGARDCPECR. A B box-type zinc finger spans residues 88–128; that stretch reads RAARPCQAHDKVKLFCLTDRALLCFFCDEPALHEQHQVTGI. 4 residues coordinate Zn(2+): Cys93, His96, Cys114, and His120. A coiled-coil region spans residues 121 to 241; that stretch reads EQHQVTGIDD…LQERLAETDR (121 aa). In terms of domain architecture, B30.2/SPRY spans 277–475; the sequence is PLQYTIWKSL…QPLRINTVRI (199 aa).

The protein belongs to the TRIM/RBCC family. As to quaternary structure, interacts with the ubiquitin-conjugating enzyme, UBE2D2. Post-translationally, polyubiquitinated, autoubiquitinated in the presence of UBE2D2.

The protein resides in the cytoplasm. It carries out the reaction S-ubiquitinyl-[E2 ubiquitin-conjugating enzyme]-L-cysteine + [acceptor protein]-L-lysine = [E2 ubiquitin-conjugating enzyme]-L-cysteine + N(6)-ubiquitinyl-[acceptor protein]-L-lysine.. It functions in the pathway protein modification; protein ubiquitination. Functionally, E3 ubiquitin ligase that plays a role in antifungal immunity by mediating 'Lys-27'-linked ubiquitination of CARD9 downstream of C-type lectin receptors; leading to CARD9 activation, followed by activation of NF-kappa-B and MAP kinase p38 pathways. E3 ubiquitin ligase activity is dependent on E2 ubiquitin-conjugating enzyme UBE2D2. The polypeptide is E3 ubiquitin-protein ligase TRIM62 (Mus musculus (Mouse)).